A 329-amino-acid polypeptide reads, in one-letter code: Isopentenyl-diphosphate delta-isomerase (329 aa).

4–5 (RK) provides a ligand contact to substrate. FMN contacts are provided by residues 59–61 (AMT), S89, and N116. Q146 is a substrate binding site. E147 provides a ligand contact to Mg(2+). FMN-binding positions include K178, S203, T208, 252–254 (GVR), and 273–274 (SR).

Belongs to the IPP isomerase type 2 family. Homooctamer. Dimer of tetramers. It depends on FMN as a cofactor. The cofactor is NADPH. Mg(2+) is required as a cofactor.

Its subcellular location is the cytoplasm. It catalyses the reaction isopentenyl diphosphate = dimethylallyl diphosphate. Involved in the biosynthesis of isoprenoids. Catalyzes the 1,3-allylic rearrangement of the homoallylic substrate isopentenyl (IPP) to its allylic isomer, dimethylallyl diphosphate (DMAPP). This is Isopentenyl-diphosphate delta-isomerase from Streptococcus pyogenes serotype M28 (strain MGAS6180).